A 461-amino-acid polypeptide reads, in one-letter code: V-type ATP synthase beta chain (461 aa).

This sequence belongs to the ATPase alpha/beta chains family.

Its function is as follows. Produces ATP from ADP in the presence of a proton gradient across the membrane. The V-type beta chain is a regulatory subunit. The protein is V-type ATP synthase beta chain of Clostridium botulinum (strain Langeland / NCTC 10281 / Type F).